We begin with the raw amino-acid sequence, 262 residues long: GTP cyclohydrolase 1 type 2 homolog (262 aa).

The a divalent metal cation site is built by His-68, His-69, Asp-108, His-226, and Glu-229.

The protein belongs to the GTP cyclohydrolase I type 2/NIF3 family. As to quaternary structure, homohexamer.

The protein is GTP cyclohydrolase 1 type 2 homolog of Ureaplasma parvum serovar 3 (strain ATCC 700970).